We begin with the raw amino-acid sequence, 63 residues long: DNA-directed RNA polymerase subunit omega (63 aa).

The protein belongs to the RNA polymerase subunit omega family. As to quaternary structure, the RNAP catalytic core consists of 2 alpha, 1 beta, 1 beta' and 1 omega subunit. When a sigma factor is associated with the core the holoenzyme is formed, which can initiate transcription.

It catalyses the reaction RNA(n) + a ribonucleoside 5'-triphosphate = RNA(n+1) + diphosphate. Functionally, promotes RNA polymerase assembly. Latches the N- and C-terminal regions of the beta' subunit thereby facilitating its interaction with the beta and alpha subunits. This Blochmanniella pennsylvanica (strain BPEN) protein is DNA-directed RNA polymerase subunit omega.